Here is a 559-residue protein sequence, read N- to C-terminus: Protein QNR-71 (559 aa).

The first 22 residues, 1 to 22, serve as a signal peptide directing secretion; it reads MSQAHRHLALLLPAEAVLCAAA. At 23-487 the chain is on the extracellular side; the sequence is MRFQDVLSNG…NGGSSSGTTK (465 aa). N-linked (GlcNAc...) asparagine glycosylation is found at Asn-92, Asn-133, Asn-145, Asn-149, Asn-192, Asn-199, Asn-248, Asn-274, Asn-307, and Asn-311. In terms of domain architecture, PKD spans 239–326; it reads VSMSQKHDRN…IIPVPCKPVT (88 aa). Residues 329-356 are disordered; that stretch reads PSLPTPAVTTDASSNSDPSAPNEMAEDN. The segment covering 335 to 347 has biased composition (polar residues); that stretch reads AVTTDASSNSDPS. An N-linked (GlcNAc...) asparagine glycan is attached at Asn-459. The helical transmembrane segment at 488 to 508 threads the bilayer; sequence GVFIFLGLLAVFGAIGAFVLY. Over 509 to 559 the chain is Cytoplasmic; that stretch reads KRYKQYKPIERSAGQAENQEGLSAYVSNFKAFFFPKSTERNPLLKSKPGIV.

It belongs to the PMEL/NMB family. In terms of tissue distribution, melanocyte-specific, restricted to the pigmented layer of the retina and the epidermis.

The protein localises to the membrane. Its function is as follows. Could be involved in melanogenesis. The polypeptide is Protein QNR-71 (QNR-71) (Coturnix japonica (Japanese quail)).